We begin with the raw amino-acid sequence, 252 residues long: Phosphate import ATP-binding protein PstB (252 aa).

The ABC transporter domain occupies 6 to 247 (MSIRDLNFYY…PAQKATEDYI (242 aa)). Residue 38 to 45 (GPSGCGKS) coordinates ATP.

This sequence belongs to the ABC transporter superfamily. Phosphate importer (TC 3.A.1.7) family. The complex is composed of two ATP-binding proteins (PstB), two transmembrane proteins (PstC and PstA) and a solute-binding protein (PstS).

It is found in the cell inner membrane. It carries out the reaction phosphate(out) + ATP + H2O = ADP + 2 phosphate(in) + H(+). Its function is as follows. Part of the ABC transporter complex PstSACB involved in phosphate import. Responsible for energy coupling to the transport system. The protein is Phosphate import ATP-binding protein PstB of Psychrobacter cryohalolentis (strain ATCC BAA-1226 / DSM 17306 / VKM B-2378 / K5).